The sequence spans 142 residues: Transcription antitermination protein NusB (142 aa).

The protein belongs to the NusB family.

Its function is as follows. Involved in transcription antitermination. Required for transcription of ribosomal RNA (rRNA) genes. Binds specifically to the boxA antiterminator sequence of the ribosomal RNA (rrn) operons. The sequence is that of Transcription antitermination protein NusB from Thermotoga sp. (strain RQ2).